Reading from the N-terminus, the 221-residue chain is Probable GTP-binding protein EngB (221 aa).

Positions G32–T205 constitute an EngB-type G domain. GTP contacts are provided by residues G40–S47, G67–L71, D85–G88, T152–D155, and V184–N186. Residues S47 and T69 each contribute to the Mg(2+) site.

Belongs to the TRAFAC class TrmE-Era-EngA-EngB-Septin-like GTPase superfamily. EngB GTPase family. Mg(2+) serves as cofactor.

In terms of biological role, necessary for normal cell division and for the maintenance of normal septation. This is Probable GTP-binding protein EngB from Leptospira borgpetersenii serovar Hardjo-bovis (strain JB197).